The sequence spans 152 residues: Small ribosomal subunit protein uS5 (152 aa).

Positions 14–77 (FEEVIVNIGR…DDAHKNLVKV (64 aa)) constitute an S5 DRBM domain.

Belongs to the universal ribosomal protein uS5 family. In terms of assembly, part of the 30S ribosomal subunit. Contacts proteins S4 and S8.

Its function is as follows. With S4 and S12 plays an important role in translational accuracy. Located at the back of the 30S subunit body where it stabilizes the conformation of the head with respect to the body. The sequence is that of Small ribosomal subunit protein uS5 from Sulfurovum sp. (strain NBC37-1).